Here is a 184-residue protein sequence, read N- to C-terminus: Large ribosomal subunit protein uL6 (184 aa).

The protein belongs to the universal ribosomal protein uL6 family. In terms of assembly, part of the 50S ribosomal subunit.

This protein binds to the 23S rRNA, and is important in its secondary structure. It is located near the subunit interface in the base of the L7/L12 stalk, and near the tRNA binding site of the peptidyltransferase center. The sequence is that of Large ribosomal subunit protein uL6 from Thermococcus onnurineus (strain NA1).